The chain runs to 644 residues: Exoribonuclease 2 (644 aa).

The RNB domain occupies 189 to 516; it reads REDLTALDFV…NHRLLKAVIK (328 aa). The S1 motif domain occupies 561–643; that stretch reads GTRFAAEIVD…ETRGIIARPV (83 aa).

Belongs to the RNR ribonuclease family. RNase II subfamily.

The protein resides in the cytoplasm. The catalysed reaction is Exonucleolytic cleavage in the 3'- to 5'-direction to yield nucleoside 5'-phosphates.. Involved in mRNA degradation. Hydrolyzes single-stranded polyribonucleotides processively in the 3' to 5' direction. The protein is Exoribonuclease 2 of Shigella sonnei (strain Ss046).